A 345-amino-acid polypeptide reads, in one-letter code: S-adenosylmethionine:tRNA ribosyltransferase-isomerase (345 aa).

Belongs to the QueA family. As to quaternary structure, monomer.

Its subcellular location is the cytoplasm. The enzyme catalyses 7-aminomethyl-7-carbaguanosine(34) in tRNA + S-adenosyl-L-methionine = epoxyqueuosine(34) in tRNA + adenine + L-methionine + 2 H(+). It participates in tRNA modification; tRNA-queuosine biosynthesis. In terms of biological role, transfers and isomerizes the ribose moiety from AdoMet to the 7-aminomethyl group of 7-deazaguanine (preQ1-tRNA) to give epoxyqueuosine (oQ-tRNA). This Shewanella sp. (strain ANA-3) protein is S-adenosylmethionine:tRNA ribosyltransferase-isomerase.